Consider the following 256-residue polypeptide: Trans-aconitate 2-methyltransferase (256 aa).

The protein belongs to the methyltransferase superfamily. Tam family.

It is found in the cytoplasm. The enzyme catalyses trans-aconitate + S-adenosyl-L-methionine = (E)-3-(methoxycarbonyl)pent-2-enedioate + S-adenosyl-L-homocysteine. Functionally, catalyzes the S-adenosylmethionine monomethyl esterification of trans-aconitate. This Rhizobium etli (strain ATCC 51251 / DSM 11541 / JCM 21823 / NBRC 15573 / CFN 42) protein is Trans-aconitate 2-methyltransferase.